Reading from the N-terminus, the 212-residue chain is External core antigen (212 aa).

Positions 1-19 (MQLFHLCLIISCSCPTVQA) are cleaved as a signal peptide. The segment at 25 to 27 (GWL) is HBEAG. Positions 165-212 (NAPILSTLPETTVVRRRGRSPRRRTPSPRRRRSQSPRRRRSQSRESQC) are disordered. Basic residues predominate over residues 178 to 205 (VRRRGRSPRRRTPSPRRRRSQSPRRRRS). One copy of the 1; half-length repeat lies at 184 to 190 (SPRRRTP). The tract at residues 184 to 206 (SPRRRTPSPRRRRSQSPRRRRSQ) is 3 X 8 AA repeats of S-P-R-R-R-R-S-Q. The propeptide occupies 184 to 212 (SPRRRTPSPRRRRSQSPRRRRSQSRESQC). A run of 2 repeats spans residues 191 to 198 (SPRRRRSQ) and 199 to 206 (SPRRRRSQ).

The protein belongs to the orthohepadnavirus precore antigen family. As to quaternary structure, homodimerizes. In terms of processing, phosphorylated. Cleaved by host furin.

Its subcellular location is the secreted. It localises to the host nucleus. May regulate immune response to the intracellular capsid in acting as a T-cell tolerogen, by having an immunoregulatory effect which prevents destruction of infected cells by cytotoxic T-cells. This immune regulation may predispose to chronicity during perinatal infections and prevent severe liver injury during adult infections. The chain is External core antigen from Hepatitis B virus genotype B2 (isolate Indonesia/pIDW420/1988) (HBV-B).